A 656-amino-acid polypeptide reads, in one-letter code: MIRSRSVLLIFRKVLYQSSCLKCLLCANSFSTSVSSSLGFRATNKELNQMIRSGYIAEARDIFEKLEARNTVTWNTMISGYVKRREMNQARKLFDVMPKRDVVTWNTMISGYVSCGGIRFLEEARKLFDEMPSRDSFSWNTMISGYAKNRRIGEALLLFEKMPERNAVSWSAMITGFCQNGEVDSAVVLFRKMPVKDSSPLCALVAGLIKNERLSEAAWVLGQYGSLVSGREDLVYAYNTLIVGYGQRGQVEAARCLFDQIPDLCGDDHGGEFRERFCKNVVSWNSMIKAYLKVGDVVSARLLFDQMKDRDTISWNTMIDGYVHVSRMEDAFALFSEMPNRDAHSWNMMVSGYASVGNVELARHYFEKTPEKHTVSWNSIIAAYEKNKDYKEAVDLFIRMNIEGEKPDPHTLTSLLSASTGLVNLRLGMQMHQIVVKTVIPDVPVHNALITMYSRCGEIMESRRIFDEMKLKREVITWNAMIGGYAFHGNASEALNLFGSMKSNGIYPSHITFVSVLNACAHAGLVDEAKAQFVSMMSVYKIEPQMEHYSSLVNVTSGQGQFEEAMYIITSMPFEPDKTVWGALLDACRIYNNVGLAHVAAEAMSRLEPESSTPYVLLYNMYADMGLWDEASQVRMNMESKRIKKERGSSWVDSST.

15 PPR repeats span residues 70 to 104, 105 to 134, 135 to 169, 170 to 200, 203 to 227, 234 to 264, 280 to 310, 311 to 345, 346 to 372, 373 to 407, 408 to 438, 442 to 472, 474 to 508, 509 to 544, and 545 to 575; these read NTVT…DVVT, WNTM…MPSR, DSFS…NAVS, WSAM…DSSP, ALVA…YGSL, LVYA…IPDL, NVVS…MKDR, DTIS…DAHS, WNMM…TPEK, HTVS…GEKP, DPHT…VVKT, DVPV…MKLK, EVIT…GIYP, SHIT…KIEP, and QMEH…MPFE. The interval 580 to 655 is type E motif; that stretch reads VWGALLDACR…ERGSSWVDSS (76 aa).

It belongs to the PPR family. PCMP-E subfamily.

It localises to the mitochondrion. The chain is Pentatricopeptide repeat-containing protein At1g62260, mitochondrial (PCMP-E10) from Arabidopsis thaliana (Mouse-ear cress).